Consider the following 41-residue polypeptide: Disintegrin obtustatin (41 aa).

Cystine bridges form between C1-C10, C6-C29, C7-C34, and C19-C36. Residues 1–41 form the Disintegrin domain; the sequence is CTTGPCCRQCKLKPAGTTCWKTSLTSHYCTGKSCDCPLYPG. The short motif at 21–23 is the Cell attachment site; atypical (KTS) element; sequence KTS.

The protein belongs to the disintegrin family. Short disintegrin subfamily. As to quaternary structure, monomer. In terms of tissue distribution, expressed by the venom gland.

It is found in the secreted. Functionally, is a potent and selective inhibitor of alpha-1/beta-1 (ITGA1/ITGB1) integrin. It blocks the adhesion of alpha-1/beta-1-expressing K562 cells to immobilized collagens IV and I with IC(50) of 2 and 0.5 nM, respectively. Potently inhibits angiogenesis in chicken and in mouse model and reduces tumor development by half. Is 25-fold less potent than viperistatin. The sequence is that of Disintegrin obtustatin from Macrovipera lebetina obtusa (Levant blunt-nosed viper).